We begin with the raw amino-acid sequence, 935 residues long: Protein translocase subunit SecA (935 aa).

Residues Gln-90, 108-112, and Asp-504 contribute to the ATP site; that span reads GEGKT.

The protein belongs to the SecA family. In terms of assembly, monomer and homodimer. Part of the essential Sec protein translocation apparatus which comprises SecA, SecYEG and auxiliary proteins SecDF. Other proteins may also be involved.

The protein resides in the cell inner membrane. Its subcellular location is the cellular thylakoid membrane. It is found in the cytoplasm. The enzyme catalyses ATP + H2O + cellular proteinSide 1 = ADP + phosphate + cellular proteinSide 2.. Its function is as follows. Part of the Sec protein translocase complex. Interacts with the SecYEG preprotein conducting channel. Has a central role in coupling the hydrolysis of ATP to the transfer of proteins into and across the cell membrane, serving as an ATP-driven molecular motor driving the stepwise translocation of polypeptide chains across the membrane. In terms of biological role, probably participates in protein translocation into and across both the cytoplasmic and thylakoid membranes in cyanobacterial cells. The sequence is that of Protein translocase subunit SecA from Gloeothece citriformis (strain PCC 7424) (Cyanothece sp. (strain PCC 7424)).